A 1639-amino-acid chain; its full sequence is Protein GFS12 (1639 aa).

One can recognise a Protein kinase 1 domain in the interval 206–294; that stretch reads LEEKSKLRCL…IRPSNILLSD (89 aa). Residues 336–608 form the BEACH domain; sequence LKISSHLDWQ…FHGFGVDNKR (273 aa). One can recognise a Protein kinase 2 domain in the interval 715–788; sequence IAGDIFSIGC…AKSLLDSPYF (74 aa). 2 WD repeats span residues 1290–1333 and 1336–1373; these read AHHG…CVSS and AHEEVVNDIGILSSTGKVASCDGTIHVWNSQTGKLISL. Residues 1377–1398 are compositionally biased toward low complexity; it reads SPSDQDQASSDPSSKNNSNPCN. The tract at residues 1377–1399 is disordered; that stretch reads SPSDQDQASSDPSSKNNSNPCNR. WD repeat units lie at residues 1465-1499, 1511-1549, and 1609-1639; these read ALCSGGSQTKHGDGASVSPSWIAAGFSSGQCRLFD, AHDGYVTKLVAPESHLLVSSSLDKTLRIWDLRKSWTPQP, and RVKSDLSTICVLPFSRLFIVGAHDGHLRICC.

This sequence belongs to the protein kinase superfamily. Tyr protein kinase family. Interacts (via protein kinase 2 domain) with BCHC1 (via PH-BEACH domain). Weakly expressed in the cotyledons of germinating seedlings. Restricted to the vascular tissues of cotyledons. Detected in root tips, apical meristem, young flower buds and receptacles.

Its function is as follows. May act predominantly to suppress BCHC1, which itself is a negative factor in protein storage vacuole (PSV) trafficking regulation and plant effector triggered immunity (ETI). Required for ETI, but not for cell death. The polypeptide is Protein GFS12 (Arabidopsis thaliana (Mouse-ear cress)).